The following is a 126-amino-acid chain: MSKVNEIIEIVKGLTVLELAELVKAMEEEFGVSAAAPVAAVAAVPAAAAPVVEEEEQTEFDVILKNVGNEKIKVIKVVREITGLGLKEAKELVDGAPNPVKEKVNKEEAETIKKKLEEVGAGIEIK.

It belongs to the bacterial ribosomal protein bL12 family. In terms of assembly, homodimer. Part of the ribosomal stalk of the 50S ribosomal subunit. Forms a multimeric L10(L12)X complex, where L10 forms an elongated spine to which 2 to 4 L12 dimers bind in a sequential fashion. Binds GTP-bound translation factors.

Its function is as follows. Forms part of the ribosomal stalk which helps the ribosome interact with GTP-bound translation factors. Is thus essential for accurate translation. This is Large ribosomal subunit protein bL12 from Desulforudis audaxviator (strain MP104C).